Here is a 758-residue protein sequence, read N- to C-terminus: Long-chain-alcohol oxidase FAO1 (758 aa).

2 consecutive transmembrane segments (helical) span residues 102–122 (IVLR…LVCL) and 155–175 (PLAR…YFTW). 246–261 (CDAVVVGSGCGGGVAA) contributes to the FAD binding site. The Proton acceptor role is filled by H689.

It belongs to the GMC oxidoreductase family.

The protein resides in the membrane. The catalysed reaction is a long-chain primary fatty alcohol + O2 = a long-chain fatty aldehyde + H2O2. Long-chain fatty alcohol oxidase involved in the omega-oxidation pathway of lipid degradation. In Arabidopsis thaliana (Mouse-ear cress), this protein is Long-chain-alcohol oxidase FAO1 (FAO1).